A 335-amino-acid polypeptide reads, in one-letter code: MNKTNKISIIGSGAMATAMAKVLYDSGNTNIFIYGIDEKELEDLKIGKNAKYFSTDIKLPSFNTTKDLKIALDKTDYIVLAIPSIFIQATFLEILKLLNSKVLVISVSKGFYPNSFLSIHEGLSKDSKSNEFVRGVVTVTGPSFAEEIIKEQLTTICAVDSNIKNAQEVQKLFSNKYFKLYVQSDVIGAEVGASFKNVLAIFSGIANQQGYGINTLASILSRGLKEMKLYNDKVGGKLSTLLGLTGVGDLILTATSPLSRNFSFGKEFVINKSKALETVKTVEGLKALENIYRSNKKYGLDLPIISSLYELIFENISLEEFKEKIWNRTLKSEFE.

Lys109 is a binding site for NADPH. Residues Lys109, Gly141, and Ser143 each contribute to the sn-glycerol 3-phosphate site. NADPH is bound at residue Ala145. Sn-glycerol 3-phosphate contacts are provided by Lys196, Asp249, Ser259, Arg260, and Asn261. The Proton acceptor role is filled by Lys196. Arg260 serves as a coordination point for NADPH. NADPH is bound at residue Glu283.

This sequence belongs to the NAD-dependent glycerol-3-phosphate dehydrogenase family.

The protein resides in the cytoplasm. The catalysed reaction is sn-glycerol 3-phosphate + NAD(+) = dihydroxyacetone phosphate + NADH + H(+). It carries out the reaction sn-glycerol 3-phosphate + NADP(+) = dihydroxyacetone phosphate + NADPH + H(+). Its pathway is membrane lipid metabolism; glycerophospholipid metabolism. In terms of biological role, catalyzes the reduction of the glycolytic intermediate dihydroxyacetone phosphate (DHAP) to sn-glycerol 3-phosphate (G3P), the key precursor for phospholipid synthesis. The polypeptide is Glycerol-3-phosphate dehydrogenase [NAD(P)+] (Mycoplasma mobile (strain ATCC 43663 / 163K / NCTC 11711) (Mesomycoplasma mobile)).